Reading from the N-terminus, the 460-residue chain is Omega-3 fatty acid desaturase, chloroplastic (460 aa).

The Histidine box-1 signature appears at 177–181 (HDCGH). The Histidine box-2 motif lies at 213–217 (HRTHH). The short motif at 380–384 (HVIHH) is the Histidine box-3 element.

Belongs to the fatty acid desaturase type 1 family.

The protein resides in the plastid. It localises to the chloroplast membrane. It participates in lipid metabolism; polyunsaturated fatty acid biosynthesis. Chloroplast omega-3 fatty acid desaturase introduces the third double bond in the biosynthesis of 16:3 and 18:3 fatty acids, important constituents of plant membranes. It is thought to use ferredoxin as an electron donor and to act on fatty acids esterified to galactolipids, sulfolipids and phosphatidylglycerol. The polypeptide is Omega-3 fatty acid desaturase, chloroplastic (FAD7A-1) (Ricinus communis (Castor bean)).